The chain runs to 126 residues: MSDLRRKGWWNVPDYFYSPLVFDMEEDQEDYIFGPDDEYLHTLEVHSNTLIQLERWFSPTGQTRVTVVGPLKARLWVMDMIRKVGSKNTLDKIKGKLMLLHIRSHPLTDQDLQIHLISGSSCWFPD.

The 60-residue stretch at 19-78 folds into the KH domain; the sequence is PLVFDMEEDQEDYIFGPDDEYLHTLEVHSNTLIQLERWFSPTGQTRVTVVGPLKARLWVM.

It belongs to the KHDC1 family.

The protein is KH homology domain-containing protein 1B (Khdc1b) of Mus musculus (Mouse).